Reading from the N-terminus, the 346-residue chain is fMet-Leu-Phe receptor (346 aa).

N-linked (GlcNAc...) asparagine glycans are attached at residues Asn-1 and Asn-7. At 1-24 (NSSLPTNISGGTPAVSAGYLFLDI) the chain is on the extracellular side. The helical transmembrane segment at 25–47 (ITYLVFAVTFVLGVLGNGLVIWV) threads the bilayer. The Cytoplasmic segment spans residues 48-58 (AGFRMTHTVTT). Residues 59–80 (ISYLNLAVADFCFTSTLPFFMV) form a helical membrane-spanning segment. The Extracellular portion of the chain corresponds to 81–97 (RKAMGGHWPFGWFLCKF). Cysteines 95 and 173 form a disulfide. Residues 98–118 (IFTIVDINLFGSVFLIALIAL) form a helical membrane-spanning segment. Residues 119–137 (DRCVCVLHPVWTQNHRTVS) are Cytoplasmic-facing. Residues 138–159 (LAKKVIIGPWVMALLLTLPVII) form a helical membrane-spanning segment. Over 160–202 (RVTTVPGKTGTVACTFNFSPWTNDPKERINVAIAMLTVRGIIR) the chain is Extracellular. The chain crosses the membrane as a helical span at residues 203–223 (FIIGFSAPMSIVAVSYGLIAT). Over 224-239 (KIHKQGLIKFSRPLRV) the chain is Cytoplasmic. A helical membrane pass occupies residues 240-263 (LSFVAAAFFLCWSPYQVVALIATV). Topologically, residues 264-282 (RIRELLQGMYKEIGIAVDV) are extracellular. The chain crosses the membrane as a helical span at residues 283 to 302 (TSALAFFNSCLNPMLYVFMG). Residues 303–346 (QDFRERLIHALPASLERALTEDSTQTSDTATNSTLPSAEVALQA) are Cytoplasmic-facing. Positions 322–346 (TEDSTQTSDTATNSTLPSAEVALQA) are disordered. Residues 323-338 (EDSTQTSDTATNSTLP) show a composition bias toward polar residues.

It belongs to the G-protein coupled receptor 1 family. Post-translationally, phosphorylated; which is necessary for desensitization.

Its subcellular location is the cell membrane. In terms of biological role, high affinity receptor for N-formyl-methionyl peptides (fMLP), which are powerful neutrophil chemotactic factors. Binding of fMLP to the receptor stimulates intracellular calcium mobilization and superoxide anion release. This response is mediated via a G-protein that activates a phosphatidylinositol-calcium second messenger system. Receptor for TAFA4, mediates its effects on chemoattracting macrophages, promoting phagocytosis and increasing ROS release. Receptor for cathepsin CTSG, leading to increased phagocyte chemotaxis. This is fMet-Leu-Phe receptor (FPR1) from Pan troglodytes (Chimpanzee).